The chain runs to 533 residues: Metallothionein expression activator (533 aa).

2 C2H2-type zinc fingers span residues 443–472 and 473–500; these read YVCL…SDRP and YRCD…NGRP. A C2H2-type 3; atypical zinc finger spans residues 501 to 524; that stretch reads YVCECLKRFNRLDALNRHKQRNIC.

The protein resides in the nucleus. Regulates the transcription of genes required for cell separation. This Schizosaccharomyces pombe (strain 972 / ATCC 24843) (Fission yeast) protein is Metallothionein expression activator (ace2).